Consider the following 572-residue polypeptide: Sulfite reductase [NADPH] hemoprotein beta-component (572 aa).

[4Fe-4S] cluster-binding residues include Cys437, Cys443, Cys482, and Cys486. Cys486 contacts siroheme.

This sequence belongs to the nitrite and sulfite reductase 4Fe-4S domain family. As to quaternary structure, alpha(8)-beta(8). The alpha component is a flavoprotein, the beta component is a hemoprotein. Siroheme serves as cofactor. [4Fe-4S] cluster is required as a cofactor.

It carries out the reaction hydrogen sulfide + 3 NADP(+) + 3 H2O = sulfite + 3 NADPH + 4 H(+). The protein operates within sulfur metabolism; hydrogen sulfide biosynthesis; hydrogen sulfide from sulfite (NADPH route): step 1/1. Functionally, component of the sulfite reductase complex that catalyzes the 6-electron reduction of sulfite to sulfide. This is one of several activities required for the biosynthesis of L-cysteine from sulfate. The sequence is that of Sulfite reductase [NADPH] hemoprotein beta-component from Bacillus licheniformis (strain ATCC 14580 / DSM 13 / JCM 2505 / CCUG 7422 / NBRC 12200 / NCIMB 9375 / NCTC 10341 / NRRL NRS-1264 / Gibson 46).